We begin with the raw amino-acid sequence, 907 residues long: Cytochrome b561, DM13 and DOMON domain-containing protein At5g54830 (907 aa).

The N-terminal stretch at 1–24 is a signal peptide; it reads MCDQRPNLLGSLVLLGFFIFFVNG. The 109-residue stretch at 31–139 folds into the DM13 domain; that stretch reads SSLIGHESEF…ASDFGHVLLS (109 aa). The interval 144–172 is disordered; sequence SDTSKAESPPSESNDVAPGKSNNSEPFKA. Polar residues predominate over residues 153 to 168; that stretch reads PSESNDVAPGKSNNSE. 2 consecutive DOMON domains span residues 184–329 and 524–645; these read DKYR…WALG and QQVK…WAMG. The 198-residue stretch at 653–850 folds into the Cytochrome b561 domain; that stretch reads LTERNMHSVT…CVVTVAYLEY (198 aa). A helical membrane pass occupies residues 685–705; sequence VLGVHGFMMFLAWGILLPGGI. The heme b site is built by His-689 and His-723. Helical transmembrane passes span 730–750, 754–774, 795–815, and 829–849; these read GLAI…GFSF, HVKF…NAWL, SHSI…FTGM, and GLNL…AYLE. Residues His-754 and His-796 each contribute to the heme b site. The span at 884 to 897 shows a compositional bias: basic and acidic residues; sequence GGFRDKDDEDRNGG. Residues 884–907 form a disordered region; it reads GGFRDKDDEDRNGGRMEIQLEPLK.

It depends on heme b as a cofactor.

It localises to the membrane. Its function is as follows. May act as a catecholamine-responsive trans-membrane electron transporter. This chain is Cytochrome b561, DM13 and DOMON domain-containing protein At5g54830, found in Arabidopsis thaliana (Mouse-ear cress).